Here is a 633-residue protein sequence, read N- to C-terminus: DNA topoisomerase 4 subunit B (633 aa).

ATP contacts are provided by residues Y5, N45, D72, 113–119 (GLHGVGA), and K337. A Toprim domain is found at 419-534 (KELFIVEGDS…LGHVYLALPP (116 aa)). Positions 425, 499, and 501 each coordinate Mg(2+).

Belongs to the type II topoisomerase family. ParE type 2 subfamily. In terms of assembly, heterotetramer composed of ParC and ParE. Requires Mg(2+) as cofactor. Mn(2+) serves as cofactor. It depends on Ca(2+) as a cofactor.

It carries out the reaction ATP-dependent breakage, passage and rejoining of double-stranded DNA.. Its function is as follows. Topoisomerase IV is essential for chromosome segregation. It relaxes supercoiled DNA. Performs the decatenation events required during the replication of a circular DNA molecule. The polypeptide is DNA topoisomerase 4 subunit B (Mycoplasma genitalium (strain ATCC 33530 / DSM 19775 / NCTC 10195 / G37) (Mycoplasmoides genitalium)).